A 262-amino-acid polypeptide reads, in one-letter code: Small ribosomal subunit protein uS2 (262 aa).

The disordered stretch occupies residues 224 to 246; it reads GNQGEDQDDAQEQQVAADKKADS.

The protein belongs to the universal ribosomal protein uS2 family.

This Lacticaseibacillus casei (strain BL23) (Lactobacillus casei) protein is Small ribosomal subunit protein uS2.